The following is a 134-amino-acid chain: MRSFRAAELPDRNSIASISGLIGSDLIQMIRFDDMHSLFVGEEALRVGLTAFTIFDGYPIPLAGQIALLGGDGSKPYRSPSITMTEAARRFECCRPVLDPVFAPMDRVANKGLIVAGALESLQVRIDRRSPVLL.

In terms of biological role, could be involved directly or indirectly in exopolysaccharide synthesis. This is Protein PsiB (psiB) from Rhizobium leguminosarum bv. phaseoli.